A 540-amino-acid chain; its full sequence is Phosphatidylinositol 4-phosphate 5-kinase type-1 beta (540 aa).

Residues 1–21 are disordered; that stretch reads MSSAAENGEAAPGKQNEEKTY. The 371-residue stretch at 25-395 folds into the PIPK domain; sequence ASSAIKGAIQ…RFLKFMNSRV (371 aa). Phosphoserine is present on residues serine 445, serine 447, and serine 448.

As to quaternary structure, interacts with RAC1, AJUBA, PLD1, PLD2 and ARF1. As to expression, detected in heart, pancreas, brain, kidney, skeletal muscle and lung.

It is found in the cytoplasm. The protein localises to the cytosol. It localises to the cell membrane. The protein resides in the endomembrane system. It catalyses the reaction a 1,2-diacyl-sn-glycero-3-phospho-(1D-myo-inositol 4-phosphate) + ATP = a 1,2-diacyl-sn-glycero-3-phospho-(1D-myo-inositol-4,5-bisphosphate) + ADP + H(+). The enzyme catalyses 1-octadecanoyl-2-(5Z,8Z,11Z,14Z)-eicosatetraenoyl-sn-glycero-3-phospho-1D-myo-inositol 4-phosphate + ATP = 1-octadecanoyl-2-(5Z,8Z,11Z,14Z)-eicosatetraenoyl-sn-glycero-3-phospho-1D-myo-inositol 4,5-bisphosphate + ADP + H(+). It carries out the reaction 1-octadecanoyl-2-(9Z)-octadecenoyl-sn-glycero-3-phospho-1D-myo-inositol 4-phosphate + ATP = 1-octadecanoyl-2-(9Z)-octadecenoyl-sn-glycero-3-phospho-1D-myo-inositol 4,5-bisphosphate + ADP + H(+). The catalysed reaction is 1-octadecanoyl-2-(9Z)-octadecenoyl-sn-glycero-3-phospho-1D-myo-inositol + ATP = 1-octadecanoyl-2-(9Z)-octadecenoyl-sn-glycero-3-phospho-1D-myo-inositol 5-phosphate + ADP + H(+). It catalyses the reaction 1-octadecanoyl-2-(9Z,12Z)-octadecadienoyl-sn-glycero-3-phospho-1D-myo-inositol + ATP = 1-octadecanoyl-2-(9Z,12Z)-octadecadienoyl-sn-glycero-3-phospho-1D-myo-inositol 5-phosphate + ADP + H(+). The enzyme catalyses 1-octadecanoyl-2-(5Z,8Z,11Z,14Z-eicosatetraenoyl)-sn-glycero-3-phospho-(1D-myo-inositol) + ATP = 1-octadecanoyl-2-(5Z,8Z,11Z,14Z)-eicosatetraenoyl-sn-glycero-3-phospho-1D-myo-inositol 5-phosphate + ADP + H(+). It carries out the reaction 1,2-di-(9Z,12Z)-octadecadienoyl-sn-glycero-3-phospho-1D-myo-inositol + ATP = 1,2-di(9Z,12Z)-octadecadienoyl-sn-glycero-3-phospho-1D-myo-inositol 5-phosphate + ADP + H(+). Functionally, catalyzes the phosphorylation of phosphatidylinositol 4-phosphate (PtdIns(4)P/PI4P) to form phosphatidylinositol 4,5-bisphosphate (PtdIns(4,5)P2/PIP2), a lipid second messenger that regulates several cellular processes such as signal transduction, vesicle trafficking, actin cytoskeleton dynamics, cell adhesion, and cell motility. PtdIns(4,5)P2 can directly act as a second messenger or can be utilized as a precursor to generate other second messengers: inositol 1,4,5-trisphosphate (IP3), diacylglycerol (DAG) or phosphatidylinositol-3,4,5-trisphosphate (PtdIns(3,4,5)P3/PIP3). Mediates RAC1-dependent reorganization of actin filaments. Contributes to the activation of phospholipase PLD2. Together with PIP5K1A, is required, after stimulation by G-protein coupled receptors, for the synthesis of IP3 that will induce stable platelet adhesion. This is Phosphatidylinositol 4-phosphate 5-kinase type-1 beta from Homo sapiens (Human).